The following is an 838-amino-acid chain: Semaphorin-4G (838 aa).

Residues 1–17 (MWGRLWPLLLSILTATA) form the signal peptide. Residues 18–675 (VPGPSLRRPS…GAQLAPDVRL (658 aa)) are Extracellular-facing. Residues 35–505 (RMTIPYEELS…APSGVIQLPL (471 aa)) form the Sema domain. N55, N111, and N126 each carry an N-linked (GlcNAc...) asparagine glycan. A disulfide bond links C104 and C115. 3 disulfides stabilise this stretch: C133-C142, C270-C377, and C294-C337. N-linked (GlcNAc...) asparagine glycosylation is present at N388. The PSI domain maps to 507-558 (SCSRYRSCYDCILARDPYCGWDPGTHACAAATTIANRTALIQDIERGNRGCE). Disulfide bonds link C508/C525 and C517/C534. N-linked (GlcNAc...) asparagine glycans are attached at residues N542 and N598. The region spanning 567-649 (PPLKTRSVLR…RTLLASYSLT (83 aa)) is the Ig-like C2-type domain. A disulfide bond links C584 and C632. The helical transmembrane segment at 676-696 (LYVLAIAALGGLCLILASSLL) threads the bilayer. Residues 697-838 (YVACLREGRR…LVEQLDESSV (142 aa)) lie on the Cytoplasmic side of the membrane. Residues 723–777 (SAVQLQTVSGQCPGEEDEGDDEGAGGLEGSCLQIIPGEGAPAPPPPPPPPPPAEL) form a disordered region. Over residues 736 to 745 (GEEDEGDDEG) the composition is skewed to acidic residues. Over residues 763 to 775 (PAPPPPPPPPPPA) the composition is skewed to pro residues. Residues S795 and S837 each carry the phosphoserine modification.

This sequence belongs to the semaphorin family. In terms of assembly, interacts with PLXNB2.

The protein localises to the cell membrane. Its function is as follows. Cell surface receptor for PLXNB2. May play a role in axon guidance. This Homo sapiens (Human) protein is Semaphorin-4G (SEMA4G).